A 333-amino-acid polypeptide reads, in one-letter code: MLFLQFLLLALLLPGGDNADASQEHVSFHVIQIFSFVNQSWARGQGSGWLDELQTHGWDSESGTIIFLHNWSKGNFSNEELSDLELLFRFYLFGLTREIQDHASQDYSKYPFEVQVKAGCELHSGKSPEGFFQVAFNGLDLLSFQNTTWVPSPGCGSLAQSVCHLLNHQYEGVTETVYNLIRSTCPRFLLGLLDAGKMYVHRQVRPEAWLSSRPSLGSGQLLLVCHASGFYPKPVWVTWMRNEQEQLGTKHGDILPNADGTWYLQVILEVASEEPAGLSCRVRHSSLGGQDIILYWGHHFSMNWIALVVIVPLVILIVLVLWFKKHCSYQDIL.

A signal peptide spans 1 to 17 (MLFLQFLLLALLLPGGD). At 18–302 (NADASQEHVS…ILYWGHHFSM (285 aa)) the chain is on the extracellular side. Residues asparagine 38, asparagine 70, asparagine 75, and asparagine 146 are each glycosylated (N-linked (GlcNAc...) asparagine). Disulfide bonds link cysteine 120–cysteine 185 and cysteine 225–cysteine 280. Positions 206-296 (PEAWLSSRPS…LGGQDIILYW (91 aa)) constitute an Ig-like domain. Residues 303–323 (NWIALVVIVPLVILIVLVLWF) form a helical membrane-spanning segment. Over 324–333 (KKHCSYQDIL) the chain is Cytoplasmic. An Internalization signal motif is present at residues 329–332 (YQDI).

In terms of assembly, heterodimer with B2M (beta-2-microglobulin). As to expression, expressed on cortical thymocytes, on certain T-cell leukemias, and in various other tissues.

It localises to the cell membrane. The protein localises to the endosome membrane. Its subcellular location is the lysosome. Its function is as follows. Antigen-presenting protein that binds self and non-self lipid and glycolipid antigens and presents them to T-cell receptors on natural killer T-cells. The chain is T-cell surface glycoprotein CD1c (CD1C) from Homo sapiens (Human).